A 142-amino-acid chain; its full sequence is Nucleoside diphosphate kinase (142 aa).

ATP-binding residues include Lys-11, Phe-59, Arg-87, Thr-93, Arg-107, and Asn-117. His-120 acts as the Pros-phosphohistidine intermediate in catalysis.

Belongs to the NDK family. As to quaternary structure, homotetramer. Mg(2+) is required as a cofactor.

Its subcellular location is the cytoplasm. The catalysed reaction is a 2'-deoxyribonucleoside 5'-diphosphate + ATP = a 2'-deoxyribonucleoside 5'-triphosphate + ADP. The enzyme catalyses a ribonucleoside 5'-diphosphate + ATP = a ribonucleoside 5'-triphosphate + ADP. Major role in the synthesis of nucleoside triphosphates other than ATP. The ATP gamma phosphate is transferred to the NDP beta phosphate via a ping-pong mechanism, using a phosphorylated active-site intermediate. The sequence is that of Nucleoside diphosphate kinase from Aquifex aeolicus (strain VF5).